The sequence spans 377 residues: Chaperone protein DnaJ (377 aa).

Positions 5–69 constitute a J domain; it reads EYYDRLGVSK…QKRAAYDQYG (65 aa). Residues 133 to 215 form a CR-type zinc finger; the sequence is GTEKEVHYNR…CHGTGHEKQS (83 aa). Zn(2+) is bound by residues cysteine 146, cysteine 149, cysteine 163, cysteine 166, cysteine 189, cysteine 192, cysteine 203, and cysteine 206. CXXCXGXG motif repeat units follow at residues 146–153, 163–170, 189–196, and 203–210; these read CHTCNGSG, CSKCHGSG, CDVCHGTG, and CPTCHGTG.

Belongs to the DnaJ family. Homodimer. It depends on Zn(2+) as a cofactor.

The protein localises to the cytoplasm. In terms of biological role, participates actively in the response to hyperosmotic and heat shock by preventing the aggregation of stress-denatured proteins and by disaggregating proteins, also in an autonomous, DnaK-independent fashion. Unfolded proteins bind initially to DnaJ; upon interaction with the DnaJ-bound protein, DnaK hydrolyzes its bound ATP, resulting in the formation of a stable complex. GrpE releases ADP from DnaK; ATP binding to DnaK triggers the release of the substrate protein, thus completing the reaction cycle. Several rounds of ATP-dependent interactions between DnaJ, DnaK and GrpE are required for fully efficient folding. Also involved, together with DnaK and GrpE, in the DNA replication of plasmids through activation of initiation proteins. This is Chaperone protein DnaJ from Streptococcus mutans serotype c (strain ATCC 700610 / UA159).